A 245-amino-acid chain; its full sequence is Protein FAM133B (245 aa).

Disordered regions lie at residues 19 to 38 (SRGP…NRPR) and 69 to 245 (WKKE…SDSP). The span at 69–80 (WKKELEKHREKL) shows a compositional bias: basic and acidic residues. Ser82 carries the post-translational modification Phosphoserine. The span at 89–102 (KKRQKKKKEKKKSG) shows a compositional bias: basic residues. Low complexity predominate over residues 103–119 (RYSSSSSSSSDSSSSSS). The span at 128-140 (QTKRRKKKKSHCH) shows a compositional bias: basic residues. Residues 165-176 (KDITEREKDTKG) are compositionally biased toward basic and acidic residues. Residues Ser190, Ser191, Ser193, and Ser195 each carry the phosphoserine modification. The segment covering 209 to 219 (SGEERERTTDK) has biased composition (basic and acidic residues). The segment covering 220 to 237 (AKKRRKHKKHSKKKKKKA) has biased composition (basic residues).

It belongs to the FAM133 family.

The polypeptide is Protein FAM133B (Fam133b) (Rattus norvegicus (Rat)).